Consider the following 227-residue polypeptide: ATP synthase F(0) complex subunit a (227 aa).

The next 6 helical transmembrane spans lie at 14–34, 73–93, 98–118, 137–157, 179–199, and 203–223; these read FLGIPMILMALALPWLLIPTP, LASLMMFLLTLNMLGLMPYIF, QLSLNLGLAVPLWLATVLIGM, ALIPILIIMQTISLFIRPLAL, VFVLMPMMPVVAILTAVLLLL, and LEVAVAMIQAYVFILLLSLYL.

This sequence belongs to the ATPase A chain family. As to quaternary structure, component of the ATP synthase complex composed at least of ATP5F1A/subunit alpha, ATP5F1B/subunit beta, ATP5MC1/subunit c (homooctomer), MT-ATP6/subunit a, MT-ATP8/subunit 8, ATP5ME/subunit e, ATP5MF/subunit f, ATP5MG/subunit g, ATP5MK/subunit k, ATP5MJ/subunit j, ATP5F1C/subunit gamma, ATP5F1D/subunit delta, ATP5F1E/subunit epsilon, ATP5PF/subunit F6, ATP5PB/subunit b, ATP5PD/subunit d, ATP5PO/subunit OSCP. ATP synthase complex consists of a soluble F(1) head domain (subunits alpha(3) and beta(3)) - the catalytic core - and a membrane F(0) domain - the membrane proton channel (subunits c, a, 8, e, f, g, k and j). These two domains are linked by a central stalk (subunits gamma, delta, and epsilon) rotating inside the F1 region and a stationary peripheral stalk (subunits F6, b, d, and OSCP). Interacts with DNAJC30; interaction is direct.

Its subcellular location is the mitochondrion inner membrane. It catalyses the reaction H(+)(in) = H(+)(out). Subunit a, of the mitochondrial membrane ATP synthase complex (F(1)F(0) ATP synthase or Complex V) that produces ATP from ADP in the presence of a proton gradient across the membrane which is generated by electron transport complexes of the respiratory chain. ATP synthase complex consist of a soluble F(1) head domain - the catalytic core - and a membrane F(1) domain - the membrane proton channel. These two domains are linked by a central stalk rotating inside the F(1) region and a stationary peripheral stalk. During catalysis, ATP synthesis in the catalytic domain of F(1) is coupled via a rotary mechanism of the central stalk subunits to proton translocation. With the subunit c (ATP5MC1), forms the proton-conducting channel in the F(0) domain, that contains two crucial half-channels (inlet and outlet) that facilitate proton movement from the mitochondrial intermembrane space (IMS) into the matrix. Protons are taken up via the inlet half-channel and released through the outlet half-channel, following a Grotthuss mechanism. The protein is ATP synthase F(0) complex subunit a of Gadus morhua (Atlantic cod).